Reading from the N-terminus, the 82-residue chain is Antitoxin MazE2 (82 aa).

Probably forms a complex with cognate toxin MazF2.

Antitoxin component of a type II toxin-antitoxin (TA) system. Labile antitoxin that binds to cognate MazF2 toxin and counteracts its endoribonuclease activity. The sequence is that of Antitoxin MazE2 (mazE2) from Mycobacterium bovis (strain ATCC BAA-935 / AF2122/97).